The sequence spans 832 residues: SID1 transmembrane family member 2 (832 aa).

An N-terminal signal peptide occupies residues 1-18 (MIAWRLPLCVLLVASVES). The Extracellular portion of the chain corresponds to 19–293 (HLGALGPKNV…VSQAVTSEAY (275 aa)). Residues N27, N54, N60, N123, N141, and N165 are each glycosylated (N-linked (GlcNAc...) asparagine). The chain crosses the membrane as a helical span at residues 294-314 (VGGMLFCLGIFLSFYLLTVLL). The Cytoplasmic segment spans residues 315–447 (ACWENWRQRK…DKRVLRKKYQ (133 aa)). 3 positions are modified to phosphoserine: S401, S403, and S404. The chain crosses the membrane as a helical span at residues 448-468 (IYFWNIATIAVFYALPVVQLV). The Extracellular segment spans residues 469–499 (ITYQTVVNVTGNQDICYYNFLCAHPLGNLSA). 2 N-linked (GlcNAc...) asparagine glycosylation sites follow: N476 and N496. A helical membrane pass occupies residues 500–520 (FNNILSNLGYILLGLLFLLII). Topologically, residues 521–546 (LQREINHNRALLRNDLYALECGIPKH) are cytoplasmic. Residues 547 to 567 (FGLFYAMGTALMMEGLLSACY) traverse the membrane as a helical segment. Topologically, residues 568–605 (HVCPNYTNFQFDTSFMYMIAGLCMLKLYQKRHPDINAS) are extracellular. N572 and N603 each carry an N-linked (GlcNAc...) asparagine glycan. The helical transmembrane segment at 606-626 (AYSAYACLAIVIFFSVLGVVF) threads the bilayer. Topologically, residues 627 to 631 (GKGNT) are cytoplasmic. The chain crosses the membrane as a helical span at residues 632–652 (AFWIVFSVIHIISTLLLSTQL). Over 653-688 (YYMGRWKLDSGIFRRILHVLYTDCIRQCSGPLYTDR) the chain is Extracellular. Residues 689–709 (MVLLVMGNIINWSLAAYGLIM) form a helical membrane-spanning segment. Topologically, residues 710-715 (RPNDFA) are cytoplasmic. The helical transmembrane segment at 716–736 (SYLLAIGICNLLLYFAFYIIM) threads the bilayer. The Extracellular portion of the chain corresponds to 737-746 (KLRSGERIKL). The helical transmembrane segment at 747–767 (IPLLCIVCTSVVWGFALFFFF) threads the bilayer. Residues 768 to 796 (QGLSTWQKTPAESREHNRDCILLDFFDDH) lie on the Cytoplasmic side of the membrane. A helical transmembrane segment spans residues 797–817 (DIWHFLSSIAMFGSFLVLLTL). The Extracellular portion of the chain corresponds to 818–832 (DDDLDTVQRDKIYVF).

Belongs to the SID1 family. Interacts with adapter protein complex 1 (AP-1) and AP-2, but not AP-3 and AP-4. Interacts with LAMP2. Post-translationally, glycosylated. Widely expressed, including in the liver, brain and kidney (at protein level).

Its subcellular location is the lysosome membrane. The protein resides in the cell membrane. Its function is as follows. Mediates the translocation of RNA and DNA across the lysosomal membrane during RNA and DNA autophagy (RDA), a process in which RNA and DNA is directly imported into lysosomes in an ATP-dependent manner, and degraded. Involved in the uptake of single-stranded oligonucleotides by living cells, a process called gymnosis. In vitro, mediates the uptake of linear DNA more efficiently than that of circular DNA, but exhibits similar uptake efficacy toward RNA and DNA. Binds long double-stranded RNA (dsRNA) (500 - 700 base pairs), but not dsRNA shorter than 100 bp. This Mus musculus (Mouse) protein is SID1 transmembrane family member 2 (Sidt2).